A 1192-amino-acid polypeptide reads, in one-letter code: Probable ATP-binding protein BrxC (1192 aa).

This sequence belongs to the BrxC family.

In terms of biological role, BREX systems (bacteriophage exclusion) provide immunity against bacteriophage. A core protein of a type 1 BREX system. This system allows phage adsorption but prevents phage DNA replication, without degradation of the phage DNA. Methylation of bacterial DNA by PglX probably guides self/non-self discrimination. When the brxA-brxB-brxC-pglX and pglZ-brxL operons are transformed into a susceptible B.subtilis strain (BEST7003) they confer resistance to bacteriophages SPbeta, SP16, Zeta, phi3T and SP02 and partial protection to phages SP01 and SP82G (these include lytic and temperate phage). They do not protect against phages phi105, rho10 or rho14. Additionally confers a very slight reduction in efficiency of plasmid transformation. The chain is Probable ATP-binding protein BrxC from Bacillus cereus (strain H3081.97).